Here is a 101-residue protein sequence, read N- to C-terminus: Small ribosomal subunit protein uS14 (101 aa).

It belongs to the universal ribosomal protein uS14 family. Part of the 30S ribosomal subunit. Contacts proteins S3 and S10.

In terms of biological role, binds 16S rRNA, required for the assembly of 30S particles and may also be responsible for determining the conformation of the 16S rRNA at the A site. This is Small ribosomal subunit protein uS14 from Bordetella parapertussis (strain 12822 / ATCC BAA-587 / NCTC 13253).